Reading from the N-terminus, the 308-residue chain is UDP-N-acetylenolpyruvoylglucosamine reductase 2 (308 aa).

Positions 31–197 constitute an FAD-binding PCMH-type domain; that stretch reads RIGGPADYLV…AEVVMALRPA (167 aa). R176 is a catalytic residue. S226 acts as the Proton donor in catalysis. Residue E296 is part of the active site.

The protein belongs to the MurB family. It depends on FAD as a cofactor.

The protein resides in the cytoplasm. The enzyme catalyses UDP-N-acetyl-alpha-D-muramate + NADP(+) = UDP-N-acetyl-3-O-(1-carboxyvinyl)-alpha-D-glucosamine + NADPH + H(+). It functions in the pathway cell wall biogenesis; peptidoglycan biosynthesis. Functionally, cell wall formation. This chain is UDP-N-acetylenolpyruvoylglucosamine reductase 2, found in Symbiobacterium thermophilum (strain DSM 24528 / JCM 14929 / IAM 14863 / T).